Reading from the N-terminus, the 348-residue chain is Dihydroorotase (348 aa).

Zn(2+)-binding residues include histidine 14 and histidine 16. Substrate contacts are provided by residues 16–18 (HLR) and asparagine 42. Zn(2+)-binding residues include lysine 100, histidine 137, and histidine 175. Lysine 100 bears the N6-carboxylysine mark. Residue histidine 137 participates in substrate binding. Leucine 220 serves as a coordination point for substrate. Aspartate 248 contributes to the Zn(2+) binding site. The active site involves aspartate 248. Histidine 252 and alanine 264 together coordinate substrate.

The protein belongs to the metallo-dependent hydrolases superfamily. DHOase family. Class II DHOase subfamily. In terms of assembly, homodimer. It depends on Zn(2+) as a cofactor.

The enzyme catalyses (S)-dihydroorotate + H2O = N-carbamoyl-L-aspartate + H(+). The protein operates within pyrimidine metabolism; UMP biosynthesis via de novo pathway; (S)-dihydroorotate from bicarbonate: step 3/3. Catalyzes the reversible cyclization of carbamoyl aspartate to dihydroorotate. The chain is Dihydroorotase from Pseudomonas putida (strain GB-1).